The primary structure comprises 197 residues: Probable GTP-binding protein EngB (197 aa).

In terms of domain architecture, EngB-type G spans 25 to 197 (SAPEIAFAGR…VRDEFFKFTR (173 aa)). GTP is bound by residues 33 to 40 (GRSNVGKS), 60 to 64 (GCTRQ), 79 to 82 (DLPG), 146 to 149 (TKID), and 177 to 179 (MSI). Positions 40 and 62 each coordinate Mg(2+).

This sequence belongs to the TRAFAC class TrmE-Era-EngA-EngB-Septin-like GTPase superfamily. EngB GTPase family. Mg(2+) is required as a cofactor.

Functionally, necessary for normal cell division and for the maintenance of normal septation. In Wolbachia sp. subsp. Drosophila simulans (strain wRi), this protein is Probable GTP-binding protein EngB.